Here is a 125-residue protein sequence, read N- to C-terminus: Small ribosomal subunit protein uS12 (125 aa).

The segment at 9–28 (RSERSKLKKKTKSPALKQCP) is disordered. A 3-methylthioaspartic acid modification is found at Asp89. Residues 104-125 (AQGVKDRKQGRSKYGTKRPKKA) are disordered. The segment covering 113–125 (GRSKYGTKRPKKA) has biased composition (basic residues).

This sequence belongs to the universal ribosomal protein uS12 family. Part of the 30S ribosomal subunit. Contacts proteins S8 and S17. May interact with IF1 in the 30S initiation complex.

In terms of biological role, with S4 and S5 plays an important role in translational accuracy. Interacts with and stabilizes bases of the 16S rRNA that are involved in tRNA selection in the A site and with the mRNA backbone. Located at the interface of the 30S and 50S subunits, it traverses the body of the 30S subunit contacting proteins on the other side and probably holding the rRNA structure together. The combined cluster of proteins S8, S12 and S17 appears to hold together the shoulder and platform of the 30S subunit. The sequence is that of Small ribosomal subunit protein uS12 from Rippkaea orientalis (strain PCC 8801 / RF-1) (Cyanothece sp. (strain PCC 8801)).